A 108-amino-acid polypeptide reads, in one-letter code: Parvalbumin beta (108 aa).

EF-hand domains follow at residues Lys-38–Thr-73 and Leu-77–Ala-108. Positions 51, 53, 55, 57, 59, 62, 90, 92, 94, 96, and 101 each coordinate Ca(2+).

This sequence belongs to the parvalbumin family.

In terms of biological role, in muscle, parvalbumin is thought to be involved in relaxation after contraction. It binds two calcium ions. This chain is Parvalbumin beta, found in Graptemys geographica (Common map turtle).